Consider the following 96-residue polypeptide: MNIRPLNDKLIVERQEVENKSEGGIVLTSQSVKKSNRGKVIAAGLGKRLENGERASMEVKVGDVVIFNDGYGVKTEKMDGKEYLILSESDVLAIVE.

Belongs to the GroES chaperonin family. Heptamer of 7 subunits arranged in a ring. Interacts with the chaperonin GroEL.

The protein resides in the cytoplasm. Its function is as follows. Together with the chaperonin GroEL, plays an essential role in assisting protein folding. The GroEL-GroES system forms a nano-cage that allows encapsulation of the non-native substrate proteins and provides a physical environment optimized to promote and accelerate protein folding. GroES binds to the apical surface of the GroEL ring, thereby capping the opening of the GroEL channel. The protein is Co-chaperonin GroES 2 of Vibrio vulnificus (strain CMCP6).